A 288-amino-acid polypeptide reads, in one-letter code: NAD(P)H-hydrate epimerase (288 aa).

A mitochondrion-targeting transit peptide spans 1–32; that stretch reads MSGLRALLGLGLLVAGSRLSRVRVQAGSCRAG. Phosphoserine is present on Ser49. One can recognise a YjeF N-terminal domain in the interval 65-275; it reads AQAVDQELFN…ALEKKYQLNL (211 aa). Position 119 to 123 (119 to 123) interacts with (6S)-NADPHX; that stretch reads NNGGD. Residue Asn120 participates in K(+) binding. Lys144 is modified (N6-succinyllysine). A K(+)-binding site is contributed by Asp185. (6S)-NADPHX-binding positions include 189-195 and Asp218; that span reads GFSFTGE. Residue Ser221 coordinates K(+).

This sequence belongs to the NnrE/AIBP family. In terms of assembly, homodimer. Interacts with APOA1 and APOA2. K(+) is required as a cofactor. In terms of processing, undergoes physiological phosphorylation during sperm capacitation, downstream to PKA activation.

It localises to the mitochondrion. It is found in the secreted. The enzyme catalyses (6R)-NADHX = (6S)-NADHX. It carries out the reaction (6R)-NADPHX = (6S)-NADPHX. Catalyzes the epimerization of the S- and R-forms of NAD(P)HX, a damaged form of NAD(P)H that is a result of enzymatic or heat-dependent hydration. This is a prerequisite for the S-specific NAD(P)H-hydrate dehydratase to allow the repair of both epimers of NAD(P)HX. Accelerates cholesterol efflux from endothelial cells to high-density lipoprotein (HDL) and thereby regulates angiogenesis. In Bos taurus (Bovine), this protein is NAD(P)H-hydrate epimerase.